We begin with the raw amino-acid sequence, 350 residues long: uncharacterized protein (350 aa).

The Integrase catalytic domain maps to asparagine 164 to valine 327.

This is an uncharacterized protein from Sinorhizobium fredii (strain NBRC 101917 / NGR234).